Consider the following 467-residue polypeptide: Probable protein phosphatase 2C 6 (467 aa).

The segment at 61–81 (VEDDAVAPGRGEEGGEASAVG) is disordered. Residues 149-457 (LWGHKSICGR…DNISVIVVDL (309 aa)) form the PPM-type phosphatase domain. Mn(2+)-binding residues include Asp-205, Gly-206, Asp-386, and Asp-448.

It belongs to the PP2C family. In terms of assembly, interacts with PYL9. Requires Mg(2+) as cofactor. It depends on Mn(2+) as a cofactor.

The protein resides in the nucleus. It is found in the cytoplasm. Its subcellular location is the cytosol. The catalysed reaction is O-phospho-L-seryl-[protein] + H2O = L-seryl-[protein] + phosphate. The enzyme catalyses O-phospho-L-threonyl-[protein] + H2O = L-threonyl-[protein] + phosphate. In terms of biological role, probable protein phosphatase that may function in abscisic acid (ABA) signaling. This Oryza sativa subsp. japonica (Rice) protein is Probable protein phosphatase 2C 6.